Consider the following 342-residue polypeptide: Succinylglutamate desuccinylase (342 aa).

Positions 64, 67, and 159 each coordinate Zn(2+). Residue glutamate 222 is part of the active site.

It belongs to the AspA/AstE family. Succinylglutamate desuccinylase subfamily. Zn(2+) is required as a cofactor.

It catalyses the reaction N-succinyl-L-glutamate + H2O = L-glutamate + succinate. Its pathway is amino-acid degradation; L-arginine degradation via AST pathway; L-glutamate and succinate from L-arginine: step 5/5. Functionally, transforms N(2)-succinylglutamate into succinate and glutamate. This chain is Succinylglutamate desuccinylase, found in Burkholderia orbicola (strain MC0-3).